Consider the following 214-residue polypeptide: Triosephosphate isomerase (214 aa).

Position 6-8 (6-8) interacts with substrate; sequence NLK. H85 serves as the catalytic Electrophile. E133 functions as the Proton acceptor in the catalytic mechanism. Substrate-binding positions include I138, G173, and 194 to 195; that span reads AS.

Belongs to the triosephosphate isomerase family. As to quaternary structure, homotetramer; dimer of dimers.

The protein localises to the cytoplasm. It catalyses the reaction D-glyceraldehyde 3-phosphate = dihydroxyacetone phosphate. Its pathway is carbohydrate biosynthesis; gluconeogenesis. It functions in the pathway carbohydrate degradation; glycolysis; D-glyceraldehyde 3-phosphate from glycerone phosphate: step 1/1. Involved in the gluconeogenesis. Catalyzes stereospecifically the conversion of dihydroxyacetone phosphate (DHAP) to D-glyceraldehyde-3-phosphate (G3P). The sequence is that of Triosephosphate isomerase from Halobacterium salinarum (strain ATCC 700922 / JCM 11081 / NRC-1) (Halobacterium halobium).